A 400-amino-acid chain; its full sequence is Argininosuccinate synthase (400 aa).

ATP is bound at residue 10-18 (AYSGGVDTS). Tyr89 contacts L-citrulline. Residue Gly119 coordinates ATP. L-aspartate contacts are provided by Thr121, Asn125, and Asp126. Position 125 (Asn125) interacts with L-citrulline. L-citrulline-binding residues include Arg129, Ser177, Ser186, Glu262, and Tyr274.

This sequence belongs to the argininosuccinate synthase family. Type 1 subfamily. As to quaternary structure, homotetramer.

It localises to the cytoplasm. It catalyses the reaction L-citrulline + L-aspartate + ATP = 2-(N(omega)-L-arginino)succinate + AMP + diphosphate + H(+). It functions in the pathway amino-acid biosynthesis; L-arginine biosynthesis; L-arginine from L-ornithine and carbamoyl phosphate: step 2/3. This Synechococcus sp. (strain JA-2-3B'a(2-13)) (Cyanobacteria bacterium Yellowstone B-Prime) protein is Argininosuccinate synthase.